A 43-amino-acid polypeptide reads, in one-letter code: Protein PsbN (43 aa).

The helical transmembrane segment at 4–24 (GILVVIFISCLLVSFTGYTIY) threads the bilayer.

Belongs to the PsbN family.

Its subcellular location is the plastid. The protein localises to the chloroplast thylakoid membrane. In terms of biological role, may play a role in photosystem I and II biogenesis. The polypeptide is Protein PsbN (Chaetosphaeridium globosum (Charophycean green alga)).